Consider the following 308-residue polypeptide: Ribonuclease HIII (308 aa).

The region spanning 92-308 (DNHIGSDEAG…ANTQKAQKLL (217 aa)) is the RNase H type-2 domain. A divalent metal cation is bound by residues aspartate 98, glutamate 99, and aspartate 204.

Belongs to the RNase HII family. RnhC subfamily. It depends on Mn(2+) as a cofactor. Mg(2+) serves as cofactor.

It localises to the cytoplasm. The catalysed reaction is Endonucleolytic cleavage to 5'-phosphomonoester.. In terms of biological role, endonuclease that specifically degrades the RNA of RNA-DNA hybrids. This is Ribonuclease HIII from Oceanobacillus iheyensis (strain DSM 14371 / CIP 107618 / JCM 11309 / KCTC 3954 / HTE831).